Here is a 111-residue protein sequence, read N- to C-terminus: WAP four-disulfide core domain protein 12 (111 aa).

Residues 1 to 23 (MGSSSFLVLMVSLALVTLVAAEG) form the signal peptide. A WAP domain is found at 27-74 (GIEKAGVCPADNIRCFKSDPPQCHTDQDCLGERKCCYLHCGFKCVIPV). Cystine bridges form between C34–C62, C41–C66, C49–C61, and C55–C70. Positions 80-111 (GGNKDEDVSGPCPEPGWEAKSPGSSSTGCPQK) are disordered. The span at 101 to 111 (PGSSSTGCPQK) shows a compositional bias: polar residues.

It is found in the secreted. Functionally, antibacterial protein. Putative acid-stable proteinase inhibitor. The polypeptide is WAP four-disulfide core domain protein 12 (WFDC12) (Macaca mulatta (Rhesus macaque)).